A 320-amino-acid chain; its full sequence is Cytochrome f (320 aa).

A signal peptide spans 1-35; the sequence is MQTRNTFSWIKEEITRSISVSLMIYIITGASISNA. 4 residues coordinate heme: Y36, C56, C59, and H60. Residues 286–306 traverse the membrane as a helical segment; it reads VQGLLFFLASIVFAQIFLVLK.

Belongs to the cytochrome f family. The 4 large subunits of the cytochrome b6-f complex are cytochrome b6, subunit IV (17 kDa polypeptide, petD), cytochrome f and the Rieske protein, while the 4 small subunits are PetG, PetL, PetM and PetN. The complex functions as a dimer. Heme serves as cofactor.

The protein resides in the plastid. Its subcellular location is the chloroplast thylakoid membrane. Component of the cytochrome b6-f complex, which mediates electron transfer between photosystem II (PSII) and photosystem I (PSI), cyclic electron flow around PSI, and state transitions. This Gossypium barbadense (Sea Island cotton) protein is Cytochrome f.